Consider the following 712-residue polypeptide: Voltage-gated chloride channel TMC4 (712 aa).

The tract at residues 1–39 (MEENPTLESEAWGSSRGWLAPREARGAPCSSPGPSLSSV) is disordered. Residues 1–168 (MEENPTLESE…GTESYFSLLR (168 aa)) lie on the Extracellular side of the membrane. Asn107 carries an N-linked (GlcNAc...) asparagine glycan. A helical membrane pass occupies residues 169 to 189 (FLLLLNVLASVLMACMTLLPT). Over 190–249 (WLGGAPPGPPGPDISSPCGSYNPHSQGLVTFATQLFNLLSGEGYLEWSPLFYGFYPPRPR) the chain is Cytoplasmic. The chain crosses the membrane as a helical span at residues 250 to 270 (LAVTYLCWAFAVGLICLLLIL). The Extracellular segment spans residues 271-348 (HRSVSGLKQT…GQQARVWLVR (78 aa)). The chain crosses the membrane as a helical span at residues 349–369 (VLLNLLVVALLGAAFYGVYWA). Residues 370–394 (TGCTVELQEMPLVQELPLLKLGVNY) lie on the Cytoplasmic side of the membrane. Residues 395-415 (LPSIFIAGVNFVLPPVFKLIA) form a helical membrane-spanning segment. The Extracellular segment spans residues 416 to 425 (PLEGYTRSRQ). Residues 426–446 (IVFILLRTVFLRLASLVVLLF) traverse the membrane as a helical segment. Residues 447–483 (SLWNQITCGGDSEAEDCKTCGYNYKQLPCWETVLGQE) lie on the Cytoplasmic side of the membrane. A helical membrane pass occupies residues 484–504 (MYKLLLFDLLTVLAVALLIQF). The Extracellular portion of the chain corresponds to 505-542 (PRKLLCGLCPGALGRLAGTQEFQVPDEVLGLIYAQTVV). Residues 543 to 565 (WVGSFFCPLLPLLNTVKFLLLFY) traverse the membrane as a helical segment. At 566 to 592 (LKKLTLFSTCSPAARTFRASAANFFFP) the chain is on the cytoplasmic side. The helical transmembrane segment at 593–613 (LVLLLGLAISSVPLLYSIFLI) threads the bilayer. The Extracellular segment spans residues 614–654 (PPSKLCGPFRGQSSIWAQIPESISSLPETTQNFLFFLGTQA). The chain crosses the membrane as a helical span at residues 655–677 (FAVPLLLISSILMAYTVALANSY). At 678–712 (GRLISELKRQRQTEAQNKVFLARRAVALTSTKPAL) the chain is on the cytoplasmic side.

It belongs to the TMC family.

Its subcellular location is the membrane. The catalysed reaction is chloride(in) = chloride(out). Its function is as follows. Voltage-gated chloride channel involved in high-concentration salt taste sensation. Depolarization induced by high NaCl concentration may trigger the activation of TMC4-mediated chloride influx into taste bud cells, helping the return to resting potential. Also allows permeation of organic anions including gluconate, but their current amplitudes at positive potentials are less than that of chloride. Involved in pH and temperature-dependent modulation of salty taste. In Homo sapiens (Human), this protein is Voltage-gated chloride channel TMC4.